Reading from the N-terminus, the 526-residue chain is Biotin carboxylase 2, chloroplastic (526 aa).

Residues 1-71 constitute a chloroplast transit peptide; it reads MEATLPVCKS…GVTCRAEKIL (71 aa). ATP is bound by residues K181, 213-274, K223, 229-230, 265-268, and H273; these read ASEI…PRHI, GG, and EKYV. Residues 185 to 382 form the ATP-grasp domain; that stretch reads RETMKKANVP…LIEEQIRVAM (198 aa). Residue K302 coordinates hydrogencarbonate. Positions 340 and 353 each coordinate ATP. 3 residues coordinate Mg(2+): E340, E353, and N355. Mn(2+) contacts are provided by E340, E353, and N355. The hydrogencarbonate site is built by R357, V360, and R403. R357 is an active-site residue. Residue R403 participates in biotin binding.

In terms of assembly, acetyl-CoA carboxylase is a heterohexamer composed of biotin carboxyl carrier protein, biotin carboxylase and two subunits each of ACCase subunit alpha and ACCase plastid-coded subunit beta (accD). The cofactor is Mg(2+). It depends on Mn(2+) as a cofactor.

It is found in the plastid. The protein localises to the chloroplast. It catalyses the reaction N(6)-biotinyl-L-lysyl-[protein] + hydrogencarbonate + ATP = N(6)-carboxybiotinyl-L-lysyl-[protein] + ADP + phosphate + H(+). It participates in lipid metabolism; malonyl-CoA biosynthesis; malonyl-CoA from acetyl-CoA: step 1/1. This protein is a component of the acetyl coenzyme A carboxylase complex; first, biotin carboxylase catalyzes the carboxylation of the carrier protein and then the transcarboxylase transfers the carboxyl group to form malonyl-CoA. This chain is Biotin carboxylase 2, chloroplastic, found in Populus trichocarpa (Western balsam poplar).